A 309-amino-acid chain; its full sequence is HPr kinase/phosphorylase (309 aa).

Catalysis depends on residues His138 and Lys159. 153–160 (GKSGIGKS) contacts ATP. Ser160 is a binding site for Mg(2+). The active-site Proton acceptor; for phosphorylation activity. Proton donor; for dephosphorylation activity is Asp177. Residues 201–210 (IEVRGIGILD) are important for the catalytic mechanism of both phosphorylation and dephosphorylation. Glu202 serves as a coordination point for Mg(2+). Residue Arg243 is part of the active site. The segment at 264 to 269 (PIKPAR) is important for the catalytic mechanism of dephosphorylation.

This sequence belongs to the HPrK/P family. In terms of assembly, homohexamer. The cofactor is Mg(2+).

It carries out the reaction [HPr protein]-L-serine + ATP = [HPr protein]-O-phospho-L-serine + ADP + H(+). The catalysed reaction is [HPr protein]-O-phospho-L-serine + phosphate + H(+) = [HPr protein]-L-serine + diphosphate. Catalyzes the ATP- as well as the pyrophosphate-dependent phosphorylation of a specific serine residue in HPr, a phosphocarrier protein of the phosphoenolpyruvate-dependent sugar phosphotransferase system (PTS). HprK/P also catalyzes the pyrophosphate-producing, inorganic phosphate-dependent dephosphorylation (phosphorolysis) of seryl-phosphorylated HPr (P-Ser-HPr). The two antagonistic activities of HprK/P are regulated by several intracellular metabolites, which change their concentration in response to the absence or presence of rapidly metabolisable carbon sources (glucose, fructose, etc.) in the growth medium. Therefore, by controlling the phosphorylation state of HPr, HPrK/P is a sensor enzyme that plays a major role in the regulation of carbon metabolism and sugar transport: it mediates carbon catabolite repression (CCR), and regulates PTS-catalyzed carbohydrate uptake and inducer exclusion. This Alkaliphilus metalliredigens (strain QYMF) protein is HPr kinase/phosphorylase.